Here is a 673-residue protein sequence, read N- to C-terminus: DNA topoisomerase 1 (673 aa).

Positions 1-134 (MVAEKPKAAA…ARRMKFSTLA (134 aa)) constitute a Toprim domain. Residues E4 and D103 each coordinate Mg(2+). Positions 149–568 (DVEMIEAGMA…MSKKTISKLL (420 aa)) constitute a Topo IA-type catalytic domain. The interval 189–194 (SAGRVQ) is interaction with DNA. Y311 serves as the catalytic O-(5'-phospho-DNA)-tyrosine intermediate. The disordered stretch occupies residues 352 to 374 (LRPVQGSKDDPAHPAIHPTGEKP). The C4-type zinc finger occupies 595–615 (CHLCGRKAVSAVSGYRLCSHH).

The protein belongs to the type IA topoisomerase family. Monomer. The cofactor is Mg(2+).

It carries out the reaction ATP-independent breakage of single-stranded DNA, followed by passage and rejoining.. In terms of biological role, releases the supercoiling and torsional tension of DNA, which is introduced during the DNA replication and transcription, by transiently cleaving and rejoining one strand of the DNA duplex. Introduces a single-strand break via transesterification at a target site in duplex DNA. The scissile phosphodiester is attacked by the catalytic tyrosine of the enzyme, resulting in the formation of a DNA-(5'-phosphotyrosyl)-enzyme intermediate and the expulsion of a 3'-OH DNA strand. The free DNA strand then undergoes passage around the unbroken strand, thus removing DNA supercoils. Finally, in the religation step, the DNA 3'-OH attacks the covalent intermediate to expel the active-site tyrosine and restore the DNA phosphodiester backbone. In Aeropyrum pernix (strain ATCC 700893 / DSM 11879 / JCM 9820 / NBRC 100138 / K1), this protein is DNA topoisomerase 1.